Reading from the N-terminus, the 1367-residue chain is DNA-directed RNA polymerase subunit beta' (1367 aa).

Residues 1-34 (MTSTSPKSRKSSSKRKGSKKKAARSKNVIPPLSK) form a disordered region. The span at 7–24 (KSRKSSSKRKGSKKKAAR) shows a compositional bias: basic residues. 4 residues coordinate Zn(2+): C250, C317, C324, and C327. The disordered stretch occupies residues 1306–1367 (SVLDDPSDAD…LQEEGLLSDE (62 aa)). Positions 1355-1367 (LEGLQEEGLLSDE) are enriched in low complexity.

Belongs to the RNA polymerase beta' chain family. RpoC2 subfamily. In cyanobacteria the RNAP catalytic core is composed of 2 alpha, 1 beta, 1 beta', 1 gamma and 1 omega subunit. When a sigma factor is associated with the core the holoenzyme is formed, which can initiate transcription. Requires Zn(2+) as cofactor.

The catalysed reaction is RNA(n) + a ribonucleoside 5'-triphosphate = RNA(n+1) + diphosphate. Functionally, DNA-dependent RNA polymerase catalyzes the transcription of DNA into RNA using the four ribonucleoside triphosphates as substrates. The sequence is that of DNA-directed RNA polymerase subunit beta' from Prochlorococcus marinus (strain SARG / CCMP1375 / SS120).